Here is a 270-residue protein sequence, read N- to C-terminus: Formamidopyrimidine-DNA glycosylase (270 aa).

The active-site Schiff-base intermediate with DNA is Pro2. Glu3 functions as the Proton donor in the catalytic mechanism. Lys58 acts as the Proton donor; for beta-elimination activity in catalysis. The DNA site is built by His91, Arg110, and Arg151. The FPG-type zinc finger occupies 236–270 (FVYGRGGEFCKVCGSTLREIRLGQRASVYCPRCQR). The Proton donor; for delta-elimination activity role is filled by Arg260.

The protein belongs to the FPG family. Monomer. Zn(2+) serves as cofactor.

It carries out the reaction Hydrolysis of DNA containing ring-opened 7-methylguanine residues, releasing 2,6-diamino-4-hydroxy-5-(N-methyl)formamidopyrimidine.. It catalyses the reaction 2'-deoxyribonucleotide-(2'-deoxyribose 5'-phosphate)-2'-deoxyribonucleotide-DNA = a 3'-end 2'-deoxyribonucleotide-(2,3-dehydro-2,3-deoxyribose 5'-phosphate)-DNA + a 5'-end 5'-phospho-2'-deoxyribonucleoside-DNA + H(+). Functionally, involved in base excision repair of DNA damaged by oxidation or by mutagenic agents. Acts as a DNA glycosylase that recognizes and removes damaged bases. Has a preference for oxidized purines, such as 7,8-dihydro-8-oxoguanine (8-oxoG). Has AP (apurinic/apyrimidinic) lyase activity and introduces nicks in the DNA strand. Cleaves the DNA backbone by beta-delta elimination to generate a single-strand break at the site of the removed base with both 3'- and 5'-phosphates. The sequence is that of Formamidopyrimidine-DNA glycosylase from Pseudomonas paraeruginosa (strain DSM 24068 / PA7) (Pseudomonas aeruginosa (strain PA7)).